The sequence spans 350 residues: Anthranilate phosphoribosyltransferase (350 aa).

Residues Gly88, 91-92, Thr96, 98-101, 116-124, and Ser128 each bind 5-phospho-alpha-D-ribose 1-diphosphate; these read GD, NIST, and KHGGRSVSS. Gly88 serves as a coordination point for anthranilate. Residue Ser100 coordinates Mg(2+). An anthranilate-binding site is contributed by Arg174. 2 residues coordinate Mg(2+): Asp233 and Glu234.

Belongs to the anthranilate phosphoribosyltransferase family. In terms of assembly, homodimer. Mg(2+) is required as a cofactor.

It carries out the reaction N-(5-phospho-beta-D-ribosyl)anthranilate + diphosphate = 5-phospho-alpha-D-ribose 1-diphosphate + anthranilate. The protein operates within amino-acid biosynthesis; L-tryptophan biosynthesis; L-tryptophan from chorismate: step 2/5. Its function is as follows. Catalyzes the transfer of the phosphoribosyl group of 5-phosphorylribose-1-pyrophosphate (PRPP) to anthranilate to yield N-(5'-phosphoribosyl)-anthranilate (PRA). This is Anthranilate phosphoribosyltransferase from Albidiferax ferrireducens (strain ATCC BAA-621 / DSM 15236 / T118) (Rhodoferax ferrireducens).